The following is a 348-amino-acid chain: GMP reductase 2 (348 aa).

Residues 26-27, Lys78, 129-131, and 180-181 each bind NADP(+); these read SR, DVA, and IG. Gly181, Gly183, and Cys186 together coordinate K(+). The Thioimidate intermediate role is filled by Cys186. The Proton donor/acceptor role is filled by Thr188. Arg189 is a binding site for K(+). GMP-binding positions include 219–221, 242–243, 268–270, and 286–290; these read DGG, GG, GMS, and RASEG. NADP(+) is bound by residues Met269 and 285–286; that span reads YR. N6-acetyllysine is present on Lys291. 314 to 317 lines the NADP(+) pocket; that stretch reads STCT.

Belongs to the IMPDH/GMPR family. GuaC type 1 subfamily. Homotetramer.

The catalysed reaction is IMP + NH4(+) + NADP(+) = GMP + NADPH + 2 H(+). Functionally, catalyzes the irreversible NADPH-dependent deamination of GMP to IMP. It functions in the conversion of nucleobase, nucleoside and nucleotide derivatives of G to A nucleotides, and in maintaining the intracellular balance of A and G nucleotides. Plays a role in modulating cellular differentiation. This Mus musculus (Mouse) protein is GMP reductase 2.